Here is a 496-residue protein sequence, read N- to C-terminus: Cytochrome P450 71D180 (496 aa).

The chain crosses the membrane as a helical; Signal-anchor for type II membrane protein span at residues 1 to 21 (MDISISWVVIIVFVLSYLILM). Residue Cys435 coordinates heme. Positions 471–496 (MSETPGLSGPRKNPLIMIPTIHNPTS) are disordered.

The protein belongs to the cytochrome P450 family. It depends on heme as a cofactor.

It is found in the membrane. The catalysed reaction is gamma-terpinene + 2 reduced [NADPH--hemoprotein reductase] + 2 O2 = carvacrol + 2 oxidized [NADPH--hemoprotein reductase] + 3 H2O + 2 H(+). It carries out the reaction (4S)-limonene + reduced [NADPH--hemoprotein reductase] + O2 = (1S,5R)-carveol + oxidized [NADPH--hemoprotein reductase] + H2O + H(+). The enzyme catalyses (4R)-limonene + reduced [NADPH--hemoprotein reductase] + O2 = (1R,5S)-carveol + oxidized [NADPH--hemoprotein reductase] + H2O + H(+). It participates in secondary metabolite biosynthesis; terpenoid biosynthesis. In terms of biological role, involved in the biosynthesis of phenolic monoterpenes natural products thymol and carvacrol which have a broad range of biological activities acting as antimicrobial compounds, insecticides, antioxidants and pharmaceutical agents. Catalyzes the C2-hydroxylation of gamma-terpinene to produce carvacrol. Mediates also the C6-hydroxylation of (4S)-limonene and (4R)-limonene to form carveol. The chain is Cytochrome P450 71D180 from Origanum majorana (Sweet marjoram).